The chain runs to 89 residues: Small ribosomal subunit protein uS15 (89 aa).

The span at 1–21 (MSITAERKAEVIKDNARDKGD) shows a compositional bias: basic and acidic residues. The interval 1 to 26 (MSITAERKAEVIKDNARDKGDTGSPE) is disordered.

This sequence belongs to the universal ribosomal protein uS15 family. Part of the 30S ribosomal subunit. Forms a bridge to the 50S subunit in the 70S ribosome, contacting the 23S rRNA.

Its function is as follows. One of the primary rRNA binding proteins, it binds directly to 16S rRNA where it helps nucleate assembly of the platform of the 30S subunit by binding and bridging several RNA helices of the 16S rRNA. In terms of biological role, forms an intersubunit bridge (bridge B4) with the 23S rRNA of the 50S subunit in the ribosome. The polypeptide is Small ribosomal subunit protein uS15 (Sphingopyxis alaskensis (strain DSM 13593 / LMG 18877 / RB2256) (Sphingomonas alaskensis)).